Reading from the N-terminus, the 523-residue chain is MVASMASALARNFLGSTPRWYKMTIVMFLIINPFIVALNPFVAGWLLVAEFIFTLSMALKCYPLLPGGLLALEAVFSGLTSAEQVKHELSANLEVLLLLMFMVAGIYFVRQLLLYVFTKLLISVRSKIALSLAFSVMAAFLSAFLDALTVVAVVISISVGFYSVYHKYVSTHPEHDINNDDSIHKQHHADLEQFRAFLRSLLMHAAVGTALGGVCTLVGEPQNLIIGEMAGWNFSEFFIRMSAVSIPVLICGLATCVLMEKLKWFGYGTVIPESVYLILKQSADHDDAHRTTQERLKLVCQAIICVWLIVGLAFHLAAVGLIGLSVIILATTFTGVSDEHAIGRAFTESLPFTALLSVFFVVVAVIIDQELFRPLIQMVLSAPQEMQLTLFYIANGVLSMVSDNVFVGTVYINEAHTALVNNVISRDHFDLLAVAINTGTNLPSVATPNGQAAFLFLLTSTLAPLVRMSYGRMMWMALPYTIVLAGVGLLSTMYLLPDMTQWFYESGWLQHKAAIPVITPASH.

10 helical membrane passes run 28 to 48, 51 to 71, 89 to 109, 137 to 157, 237 to 257, 302 to 322, 347 to 367, 390 to 410, 445 to 465, and 476 to 496; these read FLIINPFIVALNPFVAGWLLV, FIFTLSMALKCYPLLPGGLLA, LSANLEVLLLLMFMVAGIYFV, MAAFLSAFLDALTVVAVVISI, FFIRMSAVSIPVLICGLATCV, AIICVWLIVGLAFHLAAVGLI, TESLPFTALLSVFFVVVAVII, LFYIANGVLSMVSDNVFVGTV, VATPNGQAAFLFLLTSTLAPL, and MALPYTIVLAGVGLLSTMYLL.

This sequence belongs to the NhaB Na(+)/H(+) (TC 2.A.34) antiporter family.

The protein resides in the cell inner membrane. It carries out the reaction 2 Na(+)(in) + 3 H(+)(out) = 2 Na(+)(out) + 3 H(+)(in). In terms of biological role, na(+)/H(+) antiporter that extrudes sodium in exchange for external protons. This Tolumonas auensis (strain DSM 9187 / NBRC 110442 / TA 4) protein is Na(+)/H(+) antiporter NhaB.